The chain runs to 67 residues: Large ribosomal subunit protein uL29 (67 aa).

It belongs to the universal ribosomal protein uL29 family.

The chain is Large ribosomal subunit protein uL29 from Ehrlichia ruminantium (strain Gardel).